A 333-amino-acid polypeptide reads, in one-letter code: Cytochrome f (333 aa).

Residues 1–44 form the signal peptide; that stretch reads MRNACTRARLTRTARAMVKTLFIAIASVTFFFTSDLALPQSAAA. Residues tyrosine 45, cysteine 66, cysteine 69, and histidine 70 each coordinate heme. A helical transmembrane segment spans residues 299–318; the sequence is VGWLIAFVALVMLAQVMLVL.

This sequence belongs to the cytochrome f family. In terms of assembly, the 4 large subunits of the cytochrome b6-f complex are cytochrome b6, subunit IV (17 kDa polypeptide, PetD), cytochrome f and the Rieske protein, while the 4 small subunits are PetG, PetL, PetM and PetN. The complex functions as a dimer. It depends on heme as a cofactor.

It is found in the cellular thylakoid membrane. Its function is as follows. Component of the cytochrome b6-f complex, which mediates electron transfer between photosystem II (PSII) and photosystem I (PSI), cyclic electron flow around PSI, and state transitions. This Nostoc sp. (strain PCC 7120 / SAG 25.82 / UTEX 2576) protein is Cytochrome f.